A 569-amino-acid chain; its full sequence is Proline--tRNA ligase (569 aa).

The protein belongs to the class-II aminoacyl-tRNA synthetase family. ProS type 1 subfamily. As to quaternary structure, homodimer.

Its subcellular location is the cytoplasm. The catalysed reaction is tRNA(Pro) + L-proline + ATP = L-prolyl-tRNA(Pro) + AMP + diphosphate. Catalyzes the attachment of proline to tRNA(Pro) in a two-step reaction: proline is first activated by ATP to form Pro-AMP and then transferred to the acceptor end of tRNA(Pro). As ProRS can inadvertently accommodate and process non-cognate amino acids such as alanine and cysteine, to avoid such errors it has two additional distinct editing activities against alanine. One activity is designated as 'pretransfer' editing and involves the tRNA(Pro)-independent hydrolysis of activated Ala-AMP. The other activity is designated 'posttransfer' editing and involves deacylation of mischarged Ala-tRNA(Pro). The misacylated Cys-tRNA(Pro) is not edited by ProRS. In Levilactobacillus brevis (strain ATCC 367 / BCRC 12310 / CIP 105137 / JCM 1170 / LMG 11437 / NCIMB 947 / NCTC 947) (Lactobacillus brevis), this protein is Proline--tRNA ligase.